We begin with the raw amino-acid sequence, 626 residues long: Transketolase-like protein 2 (626 aa).

Substrate is bound at residue H37. Residues S40, H77, and 123 to 125 (GSL) contribute to the thiamine diphosphate site. D155 serves as a coordination point for Mg(2+). Residues G156 and N185 each coordinate thiamine diphosphate. Positions 185 and 187 each coordinate Mg(2+). The thiamine diphosphate site is built by K247 and H261. The substrate site is built by H261 and S348. Thiamine diphosphate contacts are provided by E369 and F395. The active-site Proton donor is E369. Residues H419 and D427 each coordinate substrate. Q431 contacts thiamine diphosphate. R477 is a binding site for substrate.

The protein belongs to the transketolase family. As to quaternary structure, homodimer. Requires Mg(2+) as cofactor. The cofactor is Ca(2+). Mn(2+) serves as cofactor. It depends on Co(2+) as a cofactor. Thiamine diphosphate is required as a cofactor.

It catalyses the reaction D-sedoheptulose 7-phosphate + D-glyceraldehyde 3-phosphate = aldehydo-D-ribose 5-phosphate + D-xylulose 5-phosphate. In terms of biological role, plays an essential role in total transketolase activity and cell proliferation in cancer cells; after transfection with anti-TKTL1 siRNA, total transketolase activity dramatically decreases and proliferation was significantly inhibited in cancer cells. Plays a pivotal role in carcinogenesis. The protein is Transketolase-like protein 2 (TKTL2) of Bos taurus (Bovine).